The chain runs to 595 residues: Beta-(1--&gt;2)glucan export ATP-binding/permease protein NdvA (595 aa).

Transmembrane regions (helical) follow at residues 21–41 (FLLICTANITLAIITIAEPIL), 56–76 (LVTLAVWMCFGISNIIAYVLV), 129–149 (IWLEFMRQHLSTFVALFVLVP), 158–178 (LSIVLMVLAILYILIARLVMQ), and 252–272 (ISIVCVLLLGAFFVIKGQLSV). The ABC transmembrane type-1 domain maps to 21-301 (FLLICTANIT…ISGFINLAVS (281 aa)). The region spanning 335-569 (IQFHHVTYEF…DGHFYKLLKA (235 aa)) is the ABC transporter domain. 368-375 (GPTGAGKT) lines the ATP pocket.

It belongs to the ABC transporter superfamily. Beta-(1--&gt;2)glucan exporter (TC 3.A.1.108.1) family. In terms of assembly, homodimer.

It localises to the cell inner membrane. It carries out the reaction [(1-&gt;2)-beta-D-glucosyl](n)(in) + ATP + H2O = [(1-&gt;2)-beta-D-glucosyl](n)(out) + ADP + phosphate + H(+). Involved in beta-(1--&gt;2)glucan export. Transmembrane domains (TMD) form a pore in the inner membrane and the ATP-binding domain (NBD) is responsible for energy generation. In Bartonella bacilliformis (strain ATCC 35685 / KC583 / Herrer 020/F12,63), this protein is Beta-(1--&gt;2)glucan export ATP-binding/permease protein NdvA.